Consider the following 563-residue polypeptide: (-)-germacrene D synthase (563 aa).

The stretch at 44–71 (TEITAAEKEELEKQKEKVKNLLDQTPND) forms a coiled coil. Mn(2+) is bound by residues aspartate 314 and aspartate 318. The DDXXD motif motif lies at 314 to 318 (DDIYD). Homodimerization regions lie at residues 320–326 (YGSLDEL) and 392–429 (EAEW…VGME). Mn(2+) is bound by residues aspartate 459 and glutamate 467.

This sequence belongs to the terpene synthase family. Homodimer. Mn(2+) is required as a cofactor. Requires Mg(2+) as cofactor. In terms of tissue distribution, expressed in peltate glandular trichomes. Present at low levels in flowers, leaves and stems.

It carries out the reaction (2E,6E)-farnesyl diphosphate = (-)-germacrene D + diphosphate. The protein operates within secondary metabolite biosynthesis; terpenoid biosynthesis. Functionally, involved in the biosynthesis of phenolic sesquiterpenes natural products. Sesquiterpene synthase that catalyzes mainly the formation of (-)-germacrene D and minor amounts of other sesquiterpenes (e.g. bicyclo-germacrene) from farnesyl diphosphate (FPP). Also triggers moderate amounts formation of myrcene, limonene, terpinolene and linalool in the presence of geranyl diphosphate (GPP). In Origanum vulgare (Wild marjoram), this protein is (-)-germacrene D synthase.